Reading from the N-terminus, the 205-residue chain is GTP cyclohydrolase-2 (205 aa).

GTP is bound at residue 49–53 (RVHSE). Residues Cys54, Cys65, and Cys67 each contribute to the Zn(2+) site. GTP-binding positions include Gln70, 92–94 (EGR), and Thr114. The active-site Proton acceptor is Asp126. The active-site Nucleophile is Arg128. GTP-binding residues include Thr149 and Lys154.

Belongs to the GTP cyclohydrolase II family. The cofactor is Zn(2+).

The enzyme catalyses GTP + 4 H2O = 2,5-diamino-6-hydroxy-4-(5-phosphoribosylamino)-pyrimidine + formate + 2 phosphate + 3 H(+). Its pathway is cofactor biosynthesis; riboflavin biosynthesis; 5-amino-6-(D-ribitylamino)uracil from GTP: step 1/4. Catalyzes the conversion of GTP to 2,5-diamino-6-ribosylamino-4(3H)-pyrimidinone 5'-phosphate (DARP), formate and pyrophosphate. In Pseudomonas syringae pv. tomato (strain ATCC BAA-871 / DC3000), this protein is GTP cyclohydrolase-2.